A 717-amino-acid polypeptide reads, in one-letter code: Polyribonucleotide nucleotidyltransferase (717 aa).

Mg(2+)-binding residues include aspartate 487 and aspartate 493. In terms of domain architecture, KH spans proline 554–isoleucine 613. An S1 motif domain is found at glycine 623–arginine 691.

It belongs to the polyribonucleotide nucleotidyltransferase family. Mg(2+) is required as a cofactor.

It localises to the cytoplasm. The enzyme catalyses RNA(n+1) + phosphate = RNA(n) + a ribonucleoside 5'-diphosphate. Involved in mRNA degradation. Catalyzes the phosphorolysis of single-stranded polyribonucleotides processively in the 3'- to 5'-direction. The sequence is that of Polyribonucleotide nucleotidyltransferase from Acidiphilium cryptum (strain JF-5).